Here is a 185-residue protein sequence, read N- to C-terminus: Large ribosomal subunit protein uL5 (185 aa).

Belongs to the universal ribosomal protein uL5 family. As to quaternary structure, part of the 50S ribosomal subunit; part of the 5S rRNA/L5/L18/L25 subcomplex. Contacts the 5S rRNA and the P site tRNA. Forms a bridge to the 30S subunit in the 70S ribosome.

Its function is as follows. This is one of the proteins that bind and probably mediate the attachment of the 5S RNA into the large ribosomal subunit, where it forms part of the central protuberance. In the 70S ribosome it contacts protein S13 of the 30S subunit (bridge B1b), connecting the 2 subunits; this bridge is implicated in subunit movement. Contacts the P site tRNA; the 5S rRNA and some of its associated proteins might help stabilize positioning of ribosome-bound tRNAs. This is Large ribosomal subunit protein uL5 from Streptomyces avermitilis (strain ATCC 31267 / DSM 46492 / JCM 5070 / NBRC 14893 / NCIMB 12804 / NRRL 8165 / MA-4680).